Here is a 196-residue protein sequence, read N- to C-terminus: Carnitine operon protein CaiE (196 aa).

The tract at residues 173-196 (TQPLRQMEENRPRLQGTTDVTPKR) is disordered. The segment covering 187-196 (QGTTDVTPKR) has biased composition (polar residues).

The protein belongs to the transferase hexapeptide repeat family.

The protein operates within amine and polyamine metabolism; carnitine metabolism. Functionally, overproduction of CaiE stimulates the activity of CaiB and CaiD. The polypeptide is Carnitine operon protein CaiE (Shigella dysenteriae serotype 1 (strain Sd197)).